We begin with the raw amino-acid sequence, 708 residues long: ATP-dependent RNA helicase laf-1 (708 aa).

Residues 1–21 (MESNQSNNGGSGNAALNRGGR) show a composition bias toward low complexity. The segment at 1 to 191 (MESNQSNNGG…RGTSKWENRG (191 aa)) is disordered. Residues 48 to 70 (GAGGGGYRRGGGNSGGGGGGGYD) are compositionally biased toward gly residues. Basic and acidic residues-rich tracts occupy residues 72–83 (GYNDNRDDRDNR) and 90–99 (GRDRNYEDRG). The segment covering 100-123 (YNGGGGGGGNRGYNNNRGGGGGGY) has biased composition (gly residues). The short motif at 231–259 (SLFSDLSLHEWIEENIKTAGYDRPTPVQK) is the Q motif element. The Helicase ATP-binding domain occupies 262 to 453 (IPALQGGRDL…QDFLKENYVF (192 aa)). 275 to 282 (AQTGSGKT) provides a ligand contact to ATP. Residues 397 to 400 (DEAD) carry the DEAD box motif. The region spanning 465 to 626 (NIMQKIVWVE…ELPDWLEGMS (162 aa)) is the Helicase C-terminal domain. The segment at 623 to 708 (EGMSGDMRSG…RAQPQQDWWS (86 aa)) is disordered. Composition is skewed to gly residues over residues 630–647 (RSGGGYRGRGGRGNGQRF) and 656–692 (GGSGNGGGGNGGGGGFGGGGQRSGGGGGFQSGGGGGR). Residues 699 to 708 (RAQPQQDWWS) show a composition bias toward polar residues.

The protein belongs to the DEAD box helicase family. DDX3/DED1 subfamily. As to quaternary structure, binds RNA as a monomer at low laf-1 concentrations and as a dimer at high laf-1 concentrations. As to expression, expressed in the germline and soma of young adult hermaphrodites.

It is found in the cytoplasm. The protein resides in the cytoplasmic granule. Its subcellular location is the nucleus. It localises to the stress granule. The protein localises to the inflammasome. It is found in the cell membrane. The protein resides in the cell projection. Its subcellular location is the lamellipodium. It carries out the reaction ATP + H2O = ADP + phosphate + H(+). Functionally, multifunctional ATP-dependent RNA helicase. Plays a role in RNA remodeling, but is not required for RNA unwinding. Binds to RNA in a concentration-dependent manner to stimulate annealing between two complementary strands of RNA. This process is also dependent upon ATP; ATP reduces binding to RNA and subsequently diminishes RNA annealing. Involved in many cellular processes, which do not necessarily require its ATPase/helicase catalytic activities. Involved in the regulation of transcription and translation initiation. Involved in innate immunity. Involved in both stress and inflammatory responses. Promotes liquid-liquid phase separation of P granules, which is a process important for intracellular organization and stress granule assembly. Required for embryonic development. Plays a role in sexual cell fate determination by negatively regulating the translation of the sex determining protein tra-2. May play a protective role in the response to heat and oxidative stress. May negatively regulate extrinsic apoptotic signaling pathway via death domain receptors. May be involved in mitotic chromosome segregation. The protein is ATP-dependent RNA helicase laf-1 of Caenorhabditis elegans.